Consider the following 374-residue polypeptide: Chaperone protein DnaJ (374 aa).

Residues 5-70 form the J domain; it reads DYYEVLGVAR…NKRRMYDSHG (66 aa). The segment at 130-207 adopts a CR-type zinc-finger fold; the sequence is GVERRIEIPT…CHGNGRVEED (78 aa). 8 residues coordinate Zn(2+): cysteine 143, cysteine 146, cysteine 159, cysteine 162, cysteine 181, cysteine 184, cysteine 195, and cysteine 198. CXXCXGXG motif repeat units lie at residues 143 to 150, 159 to 166, 181 to 188, and 195 to 202; these read CGDCDGSG, CNVCHGRG, CHNCGGRG, and CKTCHGNG.

Belongs to the DnaJ family. Homodimer. Zn(2+) is required as a cofactor.

It is found in the cytoplasm. Its function is as follows. Participates actively in the response to hyperosmotic and heat shock by preventing the aggregation of stress-denatured proteins and by disaggregating proteins, also in an autonomous, DnaK-independent fashion. Unfolded proteins bind initially to DnaJ; upon interaction with the DnaJ-bound protein, DnaK hydrolyzes its bound ATP, resulting in the formation of a stable complex. GrpE releases ADP from DnaK; ATP binding to DnaK triggers the release of the substrate protein, thus completing the reaction cycle. Several rounds of ATP-dependent interactions between DnaJ, DnaK and GrpE are required for fully efficient folding. Also involved, together with DnaK and GrpE, in the DNA replication of plasmids through activation of initiation proteins. In Stenotrophomonas maltophilia (strain K279a), this protein is Chaperone protein DnaJ.